The following is a 624-amino-acid chain: Probable Xaa-Pro aminopeptidase P (624 aa).

Residues Asp414, Asp425, Glu530, and Glu544 each contribute to the Mn(2+) site.

This sequence belongs to the peptidase M24B family. Mn(2+) is required as a cofactor.

It carries out the reaction Release of any N-terminal amino acid, including proline, that is linked to proline, even from a dipeptide or tripeptide.. Its function is as follows. Catalyzes the removal of a penultimate prolyl residue from the N-termini of peptides. This Chaetomium globosum (strain ATCC 6205 / CBS 148.51 / DSM 1962 / NBRC 6347 / NRRL 1970) (Soil fungus) protein is Probable Xaa-Pro aminopeptidase P (AMPP).